The primary structure comprises 387 residues: tRNA N6-adenosine threonylcarbamoyltransferase (387 aa).

Residues histidine 112 and histidine 116 each contribute to the Fe cation site. Residues 134 to 138 (LASGG), aspartate 167, glycine 180, and asparagine 325 contribute to the substrate site. Aspartate 353 provides a ligand contact to Fe cation.

This sequence belongs to the KAE1 / TsaD family. It depends on Fe(2+) as a cofactor.

It localises to the cytoplasm. It catalyses the reaction L-threonylcarbamoyladenylate + adenosine(37) in tRNA = N(6)-L-threonylcarbamoyladenosine(37) in tRNA + AMP + H(+). In terms of biological role, required for the formation of a threonylcarbamoyl group on adenosine at position 37 (t(6)A37) in tRNAs that read codons beginning with adenine. Is involved in the transfer of the threonylcarbamoyl moiety of threonylcarbamoyl-AMP (TC-AMP) to the N6 group of A37, together with TsaE and TsaB. TsaD likely plays a direct catalytic role in this reaction. The protein is tRNA N6-adenosine threonylcarbamoyltransferase of Rickettsia prowazekii (strain Madrid E).